The primary structure comprises 129 residues: Small ribosomal subunit protein uS11 (129 aa).

This sequence belongs to the universal ribosomal protein uS11 family. Part of the 30S ribosomal subunit. Interacts with proteins S7 and S18. Binds to IF-3.

Located on the platform of the 30S subunit, it bridges several disparate RNA helices of the 16S rRNA. Forms part of the Shine-Dalgarno cleft in the 70S ribosome. In Hahella chejuensis (strain KCTC 2396), this protein is Small ribosomal subunit protein uS11.